A 185-amino-acid polypeptide reads, in one-letter code: Ribosome-recycling factor (185 aa).

The protein belongs to the RRF family.

Its subcellular location is the cytoplasm. In terms of biological role, responsible for the release of ribosomes from messenger RNA at the termination of protein biosynthesis. May increase the efficiency of translation by recycling ribosomes from one round of translation to another. In Myxococcus xanthus (strain DK1622), this protein is Ribosome-recycling factor.